The primary structure comprises 539 residues: CTP synthase (539 aa).

The segment at 1 to 267 (MKEAKFIFVT…GTQVLEHFHL (267 aa)) is amidoligase domain. CTP is bound at residue Ser-15. Ser-15 contacts UTP. Residues 16 to 21 (SLGKGL) and Asp-73 contribute to the ATP site. Asp-73 and Glu-141 together coordinate Mg(2+). CTP is bound by residues 148-150 (DIE), 188-193 (KTKPTQ), and Lys-224. UTP contacts are provided by residues 188-193 (KTKPTQ) and Lys-224. The 245-residue stretch at 292–536 (TVSIVGKYTE…IKAVVNKVKK (245 aa)) folds into the Glutamine amidotransferase type-1 domain. Gly-359 is an L-glutamine binding site. Cys-386 serves as the catalytic Nucleophile; for glutamine hydrolysis. Residues 387 to 390 (LGMQ), Glu-410, and Arg-464 each bind L-glutamine. Catalysis depends on residues His-509 and Glu-511.

It belongs to the CTP synthase family. Homotetramer.

It carries out the reaction UTP + L-glutamine + ATP + H2O = CTP + L-glutamate + ADP + phosphate + 2 H(+). The enzyme catalyses L-glutamine + H2O = L-glutamate + NH4(+). The catalysed reaction is UTP + NH4(+) + ATP = CTP + ADP + phosphate + 2 H(+). It participates in pyrimidine metabolism; CTP biosynthesis via de novo pathway; CTP from UDP: step 2/2. With respect to regulation, allosterically activated by GTP, when glutamine is the substrate; GTP has no effect on the reaction when ammonia is the substrate. The allosteric effector GTP functions by stabilizing the protein conformation that binds the tetrahedral intermediate(s) formed during glutamine hydrolysis. Inhibited by the product CTP, via allosteric rather than competitive inhibition. Catalyzes the ATP-dependent amination of UTP to CTP with either L-glutamine or ammonia as the source of nitrogen. Regulates intracellular CTP levels through interactions with the four ribonucleotide triphosphates. This is CTP synthase from Wolbachia sp. subsp. Brugia malayi (strain TRS).